The following is a 461-amino-acid chain: Coronin-1A (461 aa).

The residue at position 2 (serine 2) is an N-acetylserine. Phosphoserine; by PKC is present on serine 2. WD repeat units follow at residues 13 to 63, 73 to 110, 123 to 160, 164 to 204, 207 to 251, 258 to 296, and 302 to 349; these read HVFG…LVLP, NVPL…MVWE, PVIT…LVWD, GAAV…RVIE, KGTV…ALWD, PLSL…RYFE, and PFLH…EPIA. Positions 403-418 are enriched in basic and acidic residues; that stretch reads ELRVNRGLDSARRRAT. Positions 403 to 434 are disordered; the sequence is ELRVNRGLDSARRRATPEPSGTPSSDTVSRLE. The residue at position 412 (serine 412) is a Phosphoserine; by PKC. The residue at position 418 (threonine 418) is a Phosphothreonine. Over residues 421-430 the composition is skewed to polar residues; that stretch reads PSGTPSSDTV. Serine 422 carries the post-translational modification Phosphoserine. The stretch at 424–461 forms a coiled coil; it reads TPSSDTVSRLEEDVRNLNAIVQKLQERLDRLEETVQAK.

This sequence belongs to the WD repeat coronin family. As to quaternary structure, binds actin. Phosphorylation at Ser-412 by PKC strongly down-regulates the association with actin. Post-translationally, polyubiquitinated by RNF128 with 'Lys-48'-linked chains, leading to proteasomal degradation. In terms of tissue distribution, expressed in spleen, lymph nodes, thymus, brain and at very lower levels in lung. Also expressed in cells of the lymphoid/myeloid lineage. Not expressed in Kuffper cells.

It localises to the cytoplasm. The protein resides in the cytoskeleton. It is found in the cell cortex. Its subcellular location is the cytoplasmic vesicle. The protein localises to the phagosome membrane. Functionally, may be a crucial component of the cytoskeleton of highly motile cells, functioning both in the invagination of large pieces of plasma membrane, as well as in forming protrusions of the plasma membrane involved in cell locomotion. In mycobacteria-infected cells, its retention on the phagosomal membrane prevents fusion between phagosomes and lysosomes. The chain is Coronin-1A (Coro1a) from Mus musculus (Mouse).